Consider the following 209-residue polypeptide: Pyroglutamyl-peptidase 1 (209 aa).

Catalysis depends on residues glutamate 85, cysteine 149, and histidine 168.

The protein belongs to the peptidase C15 family. As to quaternary structure, monomer.

The protein resides in the cytoplasm. The catalysed reaction is Release of an N-terminal pyroglutamyl group from a polypeptide, the second amino acid generally not being Pro.. In terms of biological role, removes 5-oxoproline from various penultimate amino acid residues except L-proline. The polypeptide is Pyroglutamyl-peptidase 1 (Pgpep1) (Mus musculus (Mouse)).